The following is a 376-amino-acid chain: PCM7-4 (376 aa).

Its function is as follows. Has antibacterial activity against Listeria monocytogenes. The protein is PCM7-4 of Bacillus velezensis.